A 1475-amino-acid chain; its full sequence is Mediator of RNA polymerase II transcription subunit 1.1 (1475 aa).

Disordered stretches follow at residues 579-600 (STIGRTRPQPRPKREPNQLTSM), 645-894 (GLAS…KMRE), and 908-1475 (PDVE…IDDE). Residues 655–666 (PVAAAAAAPGGP) are compositionally biased toward low complexity. The segment covering 755–766 (QRSSSEQHNPNP) has biased composition (polar residues). The segment covering 767 to 800 (HQMSQYQMQQYQQNQQFRMHQMQQQQQQQFQMQS) has biased composition (low complexity). The segment covering 810–819 (TDEDSDEECD) has biased composition (acidic residues). The span at 829–838 (STSSRMSSVP) shows a compositional bias: low complexity. Residues 869 to 880 (TPSPLSAPPKPF) are compositionally biased toward pro residues. The segment covering 915–929 (QQLSSSSSSSQAEAS) has biased composition (low complexity). Positions 941–952 (PPKPSSSSAPPP) are enriched in pro residues. Composition is skewed to low complexity over residues 969-989 (QQEQALQKQLQQQESVESELA) and 1037-1049 (QKPTDTSSQSTSS). 3 stretches are compositionally biased toward basic and acidic residues: residues 1052 to 1070 (PPKKEPADEQPEREKEKLI), 1080 to 1148 (VVDD…EKEP), and 1155 to 1180 (EKKDEKEKDRREPERKKGKSDGKEYS). Positions 1098–1135 (DRDRDEDREKVRDKEDKAQREKDKKEKERERRRQRDRD) form a coiled coil. Positions 1181–1193 (KASTTSLIPTLSL) are enriched in polar residues. The segment covering 1199–1215 (PKKDTVEEEKKDVKEEA) has biased composition (basic and acidic residues). The span at 1242–1252 (APVAPAVQQQQ) shows a compositional bias: low complexity. Residues 1281 to 1291 (PLQPPPPPQMT) are compositionally biased toward pro residues. Residues 1308–1317 (PGSSRPSGNR) are compositionally biased toward polar residues. Pro residues-rich tracts occupy residues 1320 to 1334 (PLPPPPPMIRGPPPD) and 1425 to 1440 (PPAPPPPQMIPLPKDP).

This sequence belongs to the Mediator complex subunit 1 family. Component of the Mediator complex.

The protein localises to the nucleus. Its function is as follows. Component of the Mediator complex, a coactivator involved in the regulated transcription of nearly all RNA polymerase II-dependent genes. Mediator functions as a bridge to convey information from gene-specific regulatory proteins to the basal RNA polymerase II transcription machinery. Mediator is recruited to promoters by direct interactions with regulatory proteins and serves as a scaffold for the assembly of a functional preinitiation complex with RNA polymerase II and the general transcription factors. The sequence is that of Mediator of RNA polymerase II transcription subunit 1.1 (sop-3) from Caenorhabditis elegans.